The primary structure comprises 213 residues: Thiamine-phosphate synthase (213 aa).

4-amino-2-methyl-5-(diphosphooxymethyl)pyrimidine contacts are provided by residues 40–44 (QFREK) and N75. D76 and D95 together coordinate Mg(2+). S113 serves as a coordination point for 4-amino-2-methyl-5-(diphosphooxymethyl)pyrimidine. Residue 139–141 (TPS) participates in 2-[(2R,5Z)-2-carboxy-4-methylthiazol-5(2H)-ylidene]ethyl phosphate binding. Position 142 (K142) interacts with 4-amino-2-methyl-5-(diphosphooxymethyl)pyrimidine. 2-[(2R,5Z)-2-carboxy-4-methylthiazol-5(2H)-ylidene]ethyl phosphate is bound by residues G171 and 191–192 (IS).

It belongs to the thiamine-phosphate synthase family. The cofactor is Mg(2+).

The enzyme catalyses 2-[(2R,5Z)-2-carboxy-4-methylthiazol-5(2H)-ylidene]ethyl phosphate + 4-amino-2-methyl-5-(diphosphooxymethyl)pyrimidine + 2 H(+) = thiamine phosphate + CO2 + diphosphate. It catalyses the reaction 2-(2-carboxy-4-methylthiazol-5-yl)ethyl phosphate + 4-amino-2-methyl-5-(diphosphooxymethyl)pyrimidine + 2 H(+) = thiamine phosphate + CO2 + diphosphate. It carries out the reaction 4-methyl-5-(2-phosphooxyethyl)-thiazole + 4-amino-2-methyl-5-(diphosphooxymethyl)pyrimidine + H(+) = thiamine phosphate + diphosphate. It participates in cofactor biosynthesis; thiamine diphosphate biosynthesis; thiamine phosphate from 4-amino-2-methyl-5-diphosphomethylpyrimidine and 4-methyl-5-(2-phosphoethyl)-thiazole: step 1/1. Condenses 4-methyl-5-(beta-hydroxyethyl)thiazole monophosphate (THZ-P) and 2-methyl-4-amino-5-hydroxymethyl pyrimidine pyrophosphate (HMP-PP) to form thiamine monophosphate (TMP). This Staphylococcus aureus (strain MSSA476) protein is Thiamine-phosphate synthase.